An 836-amino-acid polypeptide reads, in one-letter code: TATA box-binding protein-associated factor RNA polymerase I subunit C (836 aa).

Disordered stretches follow at residues glycine 662–glutamate 683 and histidine 703–phenylalanine 836. A compositionally biased stretch (polar residues) spans aspartate 738 to arginine 754. Residues arginine 780 to threonine 796 are compositionally biased toward basic and acidic residues. Threonine 802 bears the Phosphothreonine mark. Residues proline 803–proline 828 are compositionally biased toward polar residues.

As to quaternary structure, component of the transcription factor SL1/TIF-IB complex, composed of TBP and at least TAF1A, TAF1B, TAF1C and TAF1D. In the complex interacts directly with TBP, TAF1A and TAF1B. Interaction of the SL1/TIF-IB subunits with TBP excludes interaction of TBP with the transcription factor IID (TFIID) subunits. Interacts with MYC and RRN3. Interacts with p53/TP53; the interaction prevents the association of SL1/TIF-IB with UBTF and represses RNA polymerase I transcription. Part of Pol I pre-initiation complex (PIC), in which Pol I core assembles with RRN3 and promoter-bound UTBF and SL1/TIF-IB complex.

It is found in the nucleus. It localises to the nucleolus. Its function is as follows. Component of the transcription factor SL1/TIF-IB complex, which is involved in the assembly of the PIC (pre-initiation complex) during RNA polymerase I-dependent transcription. The rate of PIC formation probably is primarily dependent on the rate of association of SL1/TIF-IB with the rDNA promoter. SL1/TIF-IB is involved in stabilization of nucleolar transcription factor 1/UBTF on rDNA. Formation of SL1/TIF-IB excludes the association of TBP with TFIID subunits. Recruits RNA polymerase I to the rRNA gene promoter via interaction with RRN3. This is TATA box-binding protein-associated factor RNA polymerase I subunit C (Taf1c) from Mus musculus (Mouse).